We begin with the raw amino-acid sequence, 362 residues long: 3-dehydroquinate synthase (362 aa).

NAD(+) is bound by residues 71–76, 105–109, 129–130, lysine 142, lysine 151, and 169–172; these read DGEQYK, GVVGD, TT, and CLNT. Positions 184, 247, and 264 each coordinate Zn(2+).

It belongs to the sugar phosphate cyclases superfamily. Dehydroquinate synthase family. Co(2+) serves as cofactor. Zn(2+) is required as a cofactor. Requires NAD(+) as cofactor.

Its subcellular location is the cytoplasm. The catalysed reaction is 7-phospho-2-dehydro-3-deoxy-D-arabino-heptonate = 3-dehydroquinate + phosphate. Its pathway is metabolic intermediate biosynthesis; chorismate biosynthesis; chorismate from D-erythrose 4-phosphate and phosphoenolpyruvate: step 2/7. Its function is as follows. Catalyzes the conversion of 3-deoxy-D-arabino-heptulosonate 7-phosphate (DAHP) to dehydroquinate (DHQ). The protein is 3-dehydroquinate synthase of Enterobacter sp. (strain 638).